Consider the following 286-residue polypeptide: 3-amino-tetrahydro-pyrrolizinone reductase (286 aa).

Residue Y146 is the Proton acceptor of the active site.

The protein belongs to the short-chain dehydrogenases/reductases (SDR) family.

The catalysed reaction is 3-amino-5,6,7,7a-tetrahydro-1H-pyrrolizin-1-one + AH2 = 3-amino-tetrahydro-1H-pyrrolizin-1-ol + A. Its function is as follows. Involved in the biosynthetic pathway of pyrrolizwilline, a pyrrolizidine alkaloid. Catalyzes the reduction of 3-amino-tetrahydro-pyrrolizinone to 3-amino-tetrahydro-pyrrolizinol. The chain is 3-amino-tetrahydro-pyrrolizinone reductase (xhpD) from Xenorhabdus hominickii.